A 52-amino-acid chain; its full sequence is Large ribosomal subunit protein bL33 (52 aa).

This sequence belongs to the bacterial ribosomal protein bL33 family.

This Campylobacter jejuni subsp. doylei (strain ATCC BAA-1458 / RM4099 / 269.97) protein is Large ribosomal subunit protein bL33.